The following is a 657-amino-acid chain: MTQLAIGKPAPLGAHYDGQGVNFTLFSAHAERVELCVFDANGQEHRYDLPGHSGDIWHGYLPDARPGLRYGYRVHGPWQPAEGHRFNPAKLLIDPCARQIDGEFKDNPLLHAGHNEPDYRDNAAIAPKCVVVVDHYDWEDDAPPRTPWGSTIIYEAHVKGLTYLHPEIPVEIRGTYKALGHPVMINYLKQLGITALELLPVAQFASEPRLQRMGLSNYWGYNPVAMFALHPAYACSPETALDEFRDAIKALHKAGIEVILDIVLNHSAELDLDGPLFSLRGIDNRSYYWIREDGDYHNWTGCGNTLNLSHPAVVDYASACLRYWVETCHVDGFRFDLAAVMGRTPEFRQDAPLFTAIQNCPVLSQVKLIAEPWDIAPGGYQVGNFPPLFAEWNDHFRDAARRFWLHYDLPLGAFAGRFAASSDVFKRNGRLPSAAINLVTAHDGFTLRDCVCFNHKHNEANGEENRDGTNNNYSNNHGKEGLGGSLDLVERRRDSIHALLTTLLLSQGTPMLLAGDEHGHSQYGNNNAYCQDNQLTWLDWSQASSGLTAFTAALIHLRKRIPALVENRWWEEGDGNVRWLNRYAQPLSTDEWQNGPKQLQILLSDRFLIAINATLEVTEIVLPAGEWHAIPPFAGEDNPVITAVWQGPAHGLCVFQR.

Asp336 (nucleophile) is an active-site residue. Glu371 functions as the Proton donor in the catalytic mechanism. A compositionally biased stretch (basic and acidic residues) spans 458-467 (NEANGEENRD). Residues 458–479 (NEANGEENRDGTNNNYSNNHGK) form a disordered region.

This sequence belongs to the glycosyl hydrolase 13 family.

It catalyses the reaction Hydrolysis of (1-&gt;6)-alpha-D-glucosidic linkages to branches with degrees of polymerization of three or four glucose residues in limit dextrin.. It participates in glycan degradation; glycogen degradation. Its function is as follows. Removes maltotriose and maltotetraose chains that are attached by 1,6-alpha-linkage to the limit dextrin main chain, generating a debranched limit dextrin. The chain is Glycogen debranching enzyme from Escherichia coli O139:H28 (strain E24377A / ETEC).